The primary structure comprises 1249 residues: ATP-dependent helicase/nuclease subunit A (1249 aa).

Residues 5–482 (TNYTPSQQAV…IVLAENFRSV (478 aa)) enclose the UvrD-like helicase ATP-binding domain. 26-33 (ASAGSGKT) contributes to the ATP binding site. Positions 521–811 (ADMPQTTNLL…NVMTIHGSKG (291 aa)) constitute a UvrD-like helicase C-terminal domain.

Belongs to the helicase family. AddA subfamily. Heterodimer of AddA and AddB/RexB. The cofactor is Mg(2+).

It carries out the reaction Couples ATP hydrolysis with the unwinding of duplex DNA by translocating in the 3'-5' direction.. It catalyses the reaction ATP + H2O = ADP + phosphate + H(+). Its function is as follows. The heterodimer acts as both an ATP-dependent DNA helicase and an ATP-dependent, dual-direction single-stranded exonuclease. Recognizes the chi site generating a DNA molecule suitable for the initiation of homologous recombination. The AddA nuclease domain is required for chi fragment generation; this subunit has the helicase and 3' -&gt; 5' nuclease activities. The protein is ATP-dependent helicase/nuclease subunit A of Lactiplantibacillus plantarum (strain ATCC BAA-793 / NCIMB 8826 / WCFS1) (Lactobacillus plantarum).